The primary structure comprises 321 residues: Cytochrome f (321 aa).

Residues 1 to 35 (MQNRKTYDDWVKKWITQSISVLIMIDIMTRTSIAN) form the signal peptide. Residues Y37, C57, C60, and H61 each coordinate heme. A helical transmembrane segment spans residues 287 to 307 (VQGLLLFLASVVLAQIFLVLK).

Belongs to the cytochrome f family. In terms of assembly, the 4 large subunits of the cytochrome b6-f complex are cytochrome b6, subunit IV (17 kDa polypeptide, petD), cytochrome f and the Rieske protein, while the 4 small subunits are PetG, PetL, PetM and PetN. The complex functions as a dimer. The cofactor is heme.

It is found in the plastid. The protein resides in the chloroplast thylakoid membrane. Component of the cytochrome b6-f complex, which mediates electron transfer between photosystem II (PSII) and photosystem I (PSI), cyclic electron flow around PSI, and state transitions. This Cryptomeria japonica (Japanese cedar) protein is Cytochrome f.